The primary structure comprises 130 residues: Methylglyoxal synthase (130 aa).

Positions 1–130 constitute an MGS-like domain; sequence MSKPRIALIA…DLARNMQDVC (130 aa). Substrate is bound by residues His11, Lys15, 37–40, and 57–58; these read TGTT and SG. Catalysis depends on Asp63, which acts as the Proton donor/acceptor. His90 provides a ligand contact to substrate.

It belongs to the methylglyoxal synthase family.

The enzyme catalyses dihydroxyacetone phosphate = methylglyoxal + phosphate. In terms of biological role, catalyzes the formation of methylglyoxal from dihydroxyacetone phosphate. The protein is Methylglyoxal synthase of Burkholderia vietnamiensis (strain G4 / LMG 22486) (Burkholderia cepacia (strain R1808)).